Consider the following 897-residue polypeptide: Coiled-coil domain-containing protein lobo (897 aa).

Residues 27-49 are disordered; the sequence is EIDEQRRSQGSESDFADEMEGEF. The segment covering 40-49 has biased composition (acidic residues); the sequence is DFADEMEGEF. 2 coiled-coil regions span residues 269–306 and 801–858; these read DLKS…DLEL and SLLN…QRLT.

It belongs to the DRC7 family. As to expression, testis-specific (at protein level).

It localises to the cell projection. It is found in the cilium. The protein localises to the flagellum. The protein resides in the cytoplasm. Its subcellular location is the cytoskeleton. It localises to the cilium axoneme. Key component of the nexin-dynein regulatory complex (N-DRC), essential for N-DRC integrity. Involved in the regulation of flagellar motility. Involved in sperm motility. Required for the sperm to enter in the coiled storage seminal receptacle (SR) tubule. This is Coiled-coil domain-containing protein lobo (lobo) from Drosophila melanogaster (Fruit fly).